Here is a 139-residue protein sequence, read N- to C-terminus: Trafficking protein particle complex subunit 2-like protein (139 aa).

It belongs to the TRAPP small subunits family. Sedlin subfamily. Component of the multisubunit TRAPP (transport protein particle) complex, which includes at least TRAPPC2, TRAPPC2L, TRAPPC3, TRAPPC3L, TRAPPC4, TRAPPC5, TRAPPC8, TRAPPC9, TRAPPC10, TRAPPC11 and TRAPPC12. Interacts with the heterodimer TRAPPC3-TRAPPC6A.

The protein resides in the cytoplasm. The protein localises to the perinuclear region. It localises to the endoplasmic reticulum. Its subcellular location is the golgi apparatus. Functionally, may play a role in vesicular transport from endoplasmic reticulum to Golgi. This chain is Trafficking protein particle complex subunit 2-like protein (TRAPPC2L), found in Bos taurus (Bovine).